The following is a 307-amino-acid chain: Aspartate carbamoyltransferase catalytic subunit (307 aa).

Carbamoyl phosphate contacts are provided by Arg-54 and Thr-55. Lys-83 is an L-aspartate binding site. Carbamoyl phosphate is bound by residues Arg-104, His-132, and Gln-135. 2 residues coordinate L-aspartate: Arg-165 and Arg-228. Residues Leu-267 and Pro-268 each contribute to the carbamoyl phosphate site.

The protein belongs to the aspartate/ornithine carbamoyltransferase superfamily. ATCase family. As to quaternary structure, heterododecamer (2C3:3R2) of six catalytic PyrB chains organized as two trimers (C3), and six regulatory PyrI chains organized as three dimers (R2).

It catalyses the reaction carbamoyl phosphate + L-aspartate = N-carbamoyl-L-aspartate + phosphate + H(+). The protein operates within pyrimidine metabolism; UMP biosynthesis via de novo pathway; (S)-dihydroorotate from bicarbonate: step 2/3. Functionally, catalyzes the condensation of carbamoyl phosphate and aspartate to form carbamoyl aspartate and inorganic phosphate, the committed step in the de novo pyrimidine nucleotide biosynthesis pathway. The chain is Aspartate carbamoyltransferase catalytic subunit from Clostridium perfringens (strain ATCC 13124 / DSM 756 / JCM 1290 / NCIMB 6125 / NCTC 8237 / Type A).